Consider the following 559-residue polypeptide: Forkhead box protein O6 (559 aa).

Disordered regions lie at residues 1 to 77 (MAAK…VGPL) and 163 to 183 (SWWM…RRAV). The segment at residues 88–182 (WGNLSYADLI…KTGKTPRRRA (95 aa)) is a DNA-binding region (fork-head). S184 carries the post-translational modification Phosphoserine. Disordered stretches follow at residues 197-232 (KASK…KWAA) and 534-559 (NFDS…WVPG). Pro residues-rich tracts occupy residues 213-222 (DSPPGAPVPG) and 539-553 (LPPP…PPPN).

Phosphorylation of Ser-184 is be important in regulating the transacriptional activity. In terms of tissue distribution, expressed in brain in areas of the nucleus accumbens, cingulate cortex, parts of the amygdala and in the hippocampus.

The protein localises to the cytoplasm. It is found in the nucleus. Functionally, transcriptional activator. The sequence is that of Forkhead box protein O6 (Foxo6) from Mus musculus (Mouse).